A 593-amino-acid polypeptide reads, in one-letter code: Alanine--tRNA ligase (593 aa).

The Zn(2+) site is built by His-456, His-460, Cys-558, and His-562.

The protein belongs to the class-II aminoacyl-tRNA synthetase family. Requires Zn(2+) as cofactor.

It is found in the cytoplasm. The catalysed reaction is tRNA(Ala) + L-alanine + ATP = L-alanyl-tRNA(Ala) + AMP + diphosphate. Catalyzes the attachment of alanine to tRNA(Ala) in a two-step reaction: alanine is first activated by ATP to form Ala-AMP and then transferred to the acceptor end of tRNA(Ala). Also edits incorrectly charged Ser-tRNA(Ala) and Gly-tRNA(Ala) via its editing domain. The protein is Alanine--tRNA ligase (alaS) of Borrelia hermsii (strain HS1 / DAH).